Consider the following 188-residue polypeptide: Molybdopterin synthase catalytic subunit (188 aa).

Ser20 carries the post-translational modification Phosphoserine. Substrate contacts are provided by residues 143–144, Lys159, and 166–168; these read HR and KKE.

It belongs to the MoaE family. MOCS2B subfamily. In terms of assembly, heterotetramer; composed of 2 small (MOCS2A) and 2 large (MOCS2B) subunits. In terms of tissue distribution, highest levels are found in heart and skeletal muscle. Lower levels are present in brain, kidney and pancreas. Very low levels are found in lung and peripheral blood leukocytes.

It is found in the cytoplasm. It localises to the cytosol. The catalysed reaction is 2 [molybdopterin-synthase sulfur-carrier protein]-C-terminal-Gly-aminoethanethioate + cyclic pyranopterin phosphate + H2O = molybdopterin + 2 [molybdopterin-synthase sulfur-carrier protein]-C-terminal Gly-Gly + 2 H(+). The protein operates within cofactor biosynthesis; molybdopterin biosynthesis. Functionally, catalytic subunit of the molybdopterin synthase complex, a complex that catalyzes the conversion of precursor Z into molybdopterin. Acts by mediating the incorporation of 2 sulfur atoms from thiocarboxylated MOCS2A into precursor Z to generate a dithiolene group. This chain is Molybdopterin synthase catalytic subunit, found in Homo sapiens (Human).